A 398-amino-acid polypeptide reads, in one-letter code: Nucleotide-sugar uncharacterized transporter 2 (398 aa).

Helical transmembrane passes span 54–74 (FCGP…IILA), 84–104 (FNFP…LLAF), 119–139 (TTPF…SGLA), 150–170 (FYQM…FVLF), 179–199 (VMAL…DLEF), 201–221 (LFGA…KILW), 242–262 (FTVF…VLLF), 271–291 (AILI…LALG), 299–319 (VVLG…IFGS), and 322–342 (GFIS…YTWL).

The protein belongs to the TPT transporter family. TPT (TC 2.A.7.9) subfamily.

Its subcellular location is the membrane. This Arabidopsis thaliana (Mouse-ear cress) protein is Nucleotide-sugar uncharacterized transporter 2.